Consider the following 434-residue polypeptide: MAMQKIFAREILDSRGNPTVEVDLHTAKGRFRAAVPSGASTGIYEALELRDGDKARYLGKGVLKAVEHINKTLGPALLEKKLSVVDQEKVDKFMIELDGTENKSKFGANAILGVSLAVCKAGAAEKGVPLYRHIADLAGNPDLVLPVPAFNVINGGSHAGNKLAMQEFMILPVGASSFKEAMRIGAEVYHHLKGVIKAKYGKDATNVGDEGGFAPNILENNEALELLKTAIQAAGYPDKVVIGMDVAASEFYRNGKYDLDFKSPDDPARHISGEKLGELYKNFIQNYPVVSIEDPFDQDDWATWTSFLSGVDIQIVGDDLTVTNPKRIAQAVEKKACNCLLLKVNQIGSVTESIQACKLAQSNGWGVMVSHRSGETEDTFIADLVVGLCTGQIKTGAPCRSERLAKYNQLMRIEEALGDKAVFAGRKFRNPKAK.

A2 carries the post-translational modification N-acetylalanine. T72 is modified (phosphothreonine). 2 positions are modified to phosphoserine: S83 and S157. H158 and E167 together coordinate substrate. S176 bears the Phosphoserine mark. Position 205 is a phosphothreonine (T205). E210 (proton donor) is an active-site residue. T229 carries the phosphothreonine modification. Y236 is subject to Phosphotyrosine. D245 contacts Mg(2+). A Phosphoserine modification is found at S263. Positions 293 and 318 each coordinate substrate. Residues E293 and D318 each contribute to the Mg(2+) site. Catalysis depends on K343, which acts as the Proton acceptor. Residues 370-373 (SHRS) and K394 contribute to the substrate site.

The protein belongs to the enolase family. Mammalian enolase is composed of 3 isozyme subunits, alpha, beta and gamma, which can form homodimers or heterodimers which are cell-type and development-specific. In vitro, interacts with several glycolytic enzymes including PKM, PGM, CKM and ALDO. Also binds PLG and troponin, in vitro. Interacts with PNKD. Mg(2+) is required as a cofactor. Brain (at protein level). The alpha/alpha homodimer is expressed in embryo and in most adult tissues. The alpha/beta heterodimer and the beta/beta homodimer are found in striated muscle, and the alpha/gamma heterodimer and the gamma/gamma homodimer in neurons. In striated muscle, the fiber-type order of ENO3 expression is IIB &gt; IIX &gt; IIA &gt; I.

It localises to the cytoplasm. It catalyses the reaction (2R)-2-phosphoglycerate = phosphoenolpyruvate + H2O. Its pathway is carbohydrate degradation; glycolysis; pyruvate from D-glyceraldehyde 3-phosphate: step 4/5. Functionally, glycolytic enzyme that catalyzes the conversion of 2-phosphoglycerate to phosphoenolpyruvate. Appears to have a function in striated muscle development and regeneration. The polypeptide is Beta-enolase (Eno3) (Mus musculus (Mouse)).